Here is a 232-residue protein sequence, read N- to C-terminus: 2,3,4,5-tetrahydropyridine-2,6-dicarboxylate N-acetyltransferase (232 aa).

It belongs to the transferase hexapeptide repeat family. DapH subfamily.

It carries out the reaction (S)-2,3,4,5-tetrahydrodipicolinate + acetyl-CoA + H2O = L-2-acetamido-6-oxoheptanedioate + CoA. It functions in the pathway amino-acid biosynthesis; L-lysine biosynthesis via DAP pathway; LL-2,6-diaminopimelate from (S)-tetrahydrodipicolinate (acetylase route): step 1/3. Catalyzes the transfer of an acetyl group from acetyl-CoA to tetrahydrodipicolinate. The polypeptide is 2,3,4,5-tetrahydropyridine-2,6-dicarboxylate N-acetyltransferase (Kosmotoga olearia (strain ATCC BAA-1733 / DSM 21960 / TBF 19.5.1)).